A 186-amino-acid polypeptide reads, in one-letter code: Der GTPase-activating protein YihI (186 aa).

Positions 1-65 (MARTKKTRRI…AGSRHSAVDT (65 aa)) are disordered. Basic and acidic residues-rich tracts occupy residues 9–25 (RITD…RPEN) and 34–45 (TRYELDAKSREE).

It belongs to the YihI family. In terms of assembly, interacts with Der.

Its function is as follows. A GTPase-activating protein (GAP) that modifies Der/EngA GTPase function. May play a role in ribosome biogenesis. This chain is Der GTPase-activating protein YihI, found in Histophilus somni (strain 129Pt) (Haemophilus somnus).